The following is a 243-amino-acid chain: Large ribosomal subunit protein uL2 (243 aa).

The segment at 198–243 (VDHPFGGGGRQHPGKPKSVSRDTPPGRKVGDIASKRTGRGGKGGQE) is disordered. Over residues 221–231 (PPGRKVGDIAS) the composition is skewed to basic and acidic residues.

The protein belongs to the universal ribosomal protein uL2 family. In terms of assembly, part of the 50S ribosomal subunit. Forms a bridge to the 30S subunit in the 70S ribosome.

One of the primary rRNA binding proteins. Required for association of the 30S and 50S subunits to form the 70S ribosome, for tRNA binding and peptide bond formation. It has been suggested to have peptidyltransferase activity; this is somewhat controversial. Makes several contacts with the 16S rRNA in the 70S ribosome. The protein is Large ribosomal subunit protein uL2 of Natronomonas pharaonis (strain ATCC 35678 / DSM 2160 / CIP 103997 / JCM 8858 / NBRC 14720 / NCIMB 2260 / Gabara) (Halobacterium pharaonis).